A 241-amino-acid polypeptide reads, in one-letter code: Major prion protein (241 aa).

Positions 1-15 (MLVLFVATWSDLGLC) are cleaved as a signal peptide. Residues 16 to 31 (KKRPKPGGWNTGGSRY) form an interaction with ADGRG6 region. An interaction with GRB2, ERI3 and SYN1 region spans residues 16-223 (KKRPKPGGWN…ESQAYYQRGS (208 aa)). Positions 18–101 (RPKPGGWNTG…WHKPNKPKTS (84 aa)) are disordered. Repeat copies occupy residues 44–52 (PQGGGGWGQ), 53–60 (PHGGGWGQ), 61–68 (PHGGGWGQ), 69–76 (PHGGGWGQ), and 77–84 (PHGGGWGQ). Positions 44–84 (PQGGGGWGQPHGGGWGQPHGGGWGQPHGGGWGQPHGGGWGQ) are 5 X 8 AA tandem repeats of P-H-G-G-G-W-G-Q. Gly residues predominate over residues 45–88 (QGGGGWGQPHGGGWGQPHGGGWGQPHGGGWGQPHGGGWGQGGGT). The Cu(2+) site is built by His54, Gly55, Gly56, His62, Gly63, Gly64, His70, Gly71, Gly72, His78, Gly79, and Gly80. Over residues 91–101 (QWHKPNKPKTS) the composition is skewed to basic residues. Cys172 and Cys207 are disulfide-bonded. 2 N-linked (GlcNAc...) asparagine glycosylation sites follow: Asn174 and Asn190. The GPI-anchor amidated serine moiety is linked to residue Ser223. Residues 224–241 (SMVLFSSPPVILLISFLI) constitute a propeptide, removed in mature form.

It belongs to the prion family. In terms of assembly, monomer and homodimer. Has a tendency to aggregate into amyloid fibrils containing a cross-beta spine, formed by a steric zipper of superposed beta-strands. Soluble oligomers may represent an intermediate stage on the path to fibril formation. Copper binding may promote oligomerization. Interacts with GRB2, APP, ERI3/PRNPIP and SYN1. Mislocalized cytosolically exposed PrP interacts with MGRN1; this interaction alters MGRN1 subcellular location and causes lysosomal enlargement. Interacts with APP. Interacts with KIAA1191. Interacts with ADGRG6.

It is found in the cell membrane. Its subcellular location is the golgi apparatus. Functionally, its primary physiological function is unclear. May play a role in neuronal development and synaptic plasticity. May be required for neuronal myelin sheath maintenance. May promote myelin homeostasis through acting as an agonist for ADGRG6 receptor. May play a role in iron uptake and iron homeostasis. Soluble oligomers are toxic to cultured neuroblastoma cells and induce apoptosis (in vitro). Association with GPC1 (via its heparan sulfate chains) targets PRNP to lipid rafts. Also provides Cu(2+) or Zn(2+) for the ascorbate-mediated GPC1 deaminase degradation of its heparan sulfate side chains. This chain is Major prion protein (PRNP), found in Mandrillus sphinx (Mandrill).